Reading from the N-terminus, the 332-residue chain is PRKC apoptosis WT1 regulator protein (332 aa).

Polar residues-rich tracts occupy residues 1 to 14 (MATG…STTD) and 52 to 62 (AQTTAAGTSEL). Residues 1–253 (MATGGYRSSG…HNRDTSAPAN (253 aa)) are disordered. A B30.2/SPRY domain-binding motif motif is present at residues 61–65 (ELNHG). The span at 65 to 79 (GPAGAAAPAAPGPGA) shows a compositional bias: low complexity. The Nuclear localization signal motif lies at 137–153 (RKGKGQIEKRKLREKRR). Residues 137–195 (RKGKGQIEKRKLREKRRSTGVVNIPAAECLDEYEDDEAGQKERKREDAITQQNTIQNEA) form a selective for apoptosis induction in cancer cells (SAC) region. T155 is modified (phosphothreonine; by PKA). Residues 174-184 (AGQKERKREDA) show a composition bias toward basic and acidic residues. The stretch at 176-198 (QKERKREDAITQQNTIQNEAASL) forms a coiled coil. Over residues 185-195 (ITQQNTIQNEA) the composition is skewed to polar residues. Phosphoserine is present on S223. Basic and acidic residues predominate over residues 234–247 (PRTDRSGFSRHNRD). Positions 292–332 (IGKLKEEIDLLNRDLDDMEDENEQLKQENKTLLKVVGQLTR) are leucine-zipper.

Homooligomer. Interacts (via the C-terminal region) with WT1. Interacts with THAP1. Interacts with AATF. Interacts with BACE1. Interacts with SPSB1 (via B30.2/SPRY domain); this interaction is direct and occurs in association with the Elongin BC complex. Interacts with SPSB2 (via B30.2/SPRY domain); this interaction occurs in association with the Elongin BC complex. Interacts with SPSB4 (via B30.2/SPRY domain); this interaction occurs in association with the Elongin BC complex. Component of a ternary complex composed of SQSTM1 and PRKCZ. Interacts with actin. Preferentially phosphorylated at the Thr-155 by PKC in cancer cells.

It localises to the cytoplasm. The protein resides in the nucleus. In terms of biological role, pro-apoptotic protein capable of selectively inducing apoptosis in cancer cells, sensitizing the cells to diverse apoptotic stimuli and causing regression of tumors in animal models. Induces apoptosis in certain cancer cells by activation of the Fas prodeath pathway and coparallel inhibition of NF-kappa-B transcriptional activity. Inhibits the transcriptional activation and augments the transcriptional repression mediated by WT1. Down-regulates the anti-apoptotic protein BCL2 via its interaction with WT1. Also seems to be a transcriptional repressor by itself. May be directly involved in regulating the amyloid precursor protein (APP) cleavage activity of BACE1. This chain is PRKC apoptosis WT1 regulator protein (Pawr), found in Rattus norvegicus (Rat).